Reading from the N-terminus, the 173-residue chain is Photosystem I assembly protein Ycf3 (173 aa).

3 TPR repeats span residues alanine 35 to threonine 68, glycine 72 to leucine 105, and glycine 120 to asparagine 153.

This sequence belongs to the Ycf3 family.

It localises to the cellular thylakoid membrane. In terms of biological role, essential for the assembly of the photosystem I (PSI) complex. May act as a chaperone-like factor to guide the assembly of the PSI subunits. This chain is Photosystem I assembly protein Ycf3, found in Nostoc sp. (strain PCC 7120 / SAG 25.82 / UTEX 2576).